The following is a 303-amino-acid chain: Putative ankyrin repeat protein R601 (303 aa).

ANK repeat units lie at residues 86-115 (DDNM…DVTV), 117-146 (NNFA…DITV), 147-176 (DNYF…NVDS), and 200-233 (NADV…DVSY).

The sequence is that of Putative ankyrin repeat protein R601 from Acanthamoeba polyphaga (Amoeba).